A 1463-amino-acid chain; its full sequence is Secretory phospholipase A2 receptor (1463 aa).

Residues 1–20 (MPLLSLSLLLLLLQVPAGSA) form the signal peptide. Topologically, residues 21-1392 (ETAAWAVTPE…IHTVKKHPGK (1372 aa)) are extracellular. One can recognise a Ricin B-type lectin domain in the interval 38–115 (KGIFIIQSEN…CDSTHVSLKW (78 aa)). Asn-93 is a glycosylation site (N-linked (GlcNAc...) asparagine). The Fibronectin type-II domain maps to 173-221 (AHGTPCMFPFQYNQQWHHECTREGREDNLLWCATTSRYERDEKWGFCPD). Cystine bridges form between Cys-178-Cys-204, Cys-192-Cys-219, Cys-260-Cys-354, Cys-330-Cys-346, Cys-406-Cys-501, Cys-478-Cys-493, Cys-617-Cys-634, Cys-699-Cys-796, Cys-774-Cys-788, Cys-840-Cys-938, Cys-915-Cys-930, Cys-992-Cys-1096, Cys-1068-Cys-1088, Cys-1209-Cys-1223, Cys-1280-Cys-1377, and Cys-1354-Cys-1369. C-type lectin domains lie at 229–353 (CDAV…LPYV), 357–500 (YLNP…LFYL), 504–641 (TGLV…KAMS), 646–795 (PVEN…REWI), 799–937 (PRDV…MPSI), 941–1095 (KKVW…YGFV), 1099–1230 (MQDA…LQGA), and 1235–1376 (PTET…KGFI). N-linked (GlcNAc...) asparagine glycosylation is present at Asn-454. N-linked (GlcNAc...) asparagine glycosylation occurs at Asn-1057. Residues 1393–1421 (GPSHSVIPLTVALTLLVILAISTLSFCMY) form a helical membrane-spanning segment. Topologically, residues 1422–1463 (KHSHIIFGRLAQFRNPYYPSANFSTVHLEENILISDLEKNDQ) are cytoplasmic. An Endocytosis signal motif is present at residues 1436–1442 (NPYYPSA).

Interacts with sPLA2-IB/PLA2G1B; this interaction mediates intracellular signaling as well as clearance of extracellular sPLA2-IB/PLA2G1B via endocytotic pathway. Interacts with sPLA2-X/PLA2G10; this interaction mediates sPLA2-X/PLA2G10 clearance and inactivation. In terms of processing, the secretory phospholipase A2 receptor form may be produced by the action of metalloproteinases. It contains all extracellular domains and only lacks transmembrane and cytosolic regions. It is however unclear whether this form is produced by proteolytic cleavage as suggested by some experiments, or by alternative splicing.

It localises to the cell membrane. Its subcellular location is the secreted. Receptor for secretory phospholipase A2 (sPLA2). Also able to bind to snake PA2-like toxins. Although its precise function remains unclear, binding of sPLA2 to its receptor participates in both positive and negative regulation of sPLA2 functions as well as clearance of sPLA2. Binding of sPLA2-IB/PLA2G1B induces various effects depending on the cell type, such as activation of the mitogen-activated protein kinase (MAPK) cascade to induce cell proliferation, the production of lipid mediators, selective release of arachidonic acid in bone marrow-derived mast cells. In neutrophils, binding of sPLA2-IB/PLA2G1B can activate p38 MAPK to stimulate elastase release and cell adhesion. May be involved in responses in pro-inflammatory cytokine productions during endotoxic shock. Also has endocytic properties and rapidly internalizes sPLA2 ligands, which is particularly important for the clearance of extracellular sPLA2s to protect their potent enzymatic activities. The soluble secretory phospholipase A2 receptor form is circulating and acts as a negative regulator of sPLA2 functions by blocking the biological functions of sPLA2-IB/PLA2G1B and sPLA2-X/PLA2G10. The sequence is that of Secretory phospholipase A2 receptor (PLA2R1) from Bos taurus (Bovine).